The following is a 480-amino-acid chain: Adenylosuccinate lyase (480 aa).

R14, Y15, R79, H80, and D81 together coordinate AMP. H80 serves as a coordination point for fumarate. The Proton donor/acceptor role is filled by H153. Q236 serves as a coordination point for AMP. Q236 lines the fumarate pocket. A N(6)-(1,2-dicarboxyethyl)-AMP-binding site is contributed by Q236. The active-site Proton donor/acceptor is S284. The fumarate site is built by S285, K290, and N292. N(6)-(1,2-dicarboxyethyl)-AMP is bound by residues S285, K290, and N292. R298 is an AMP binding site. N(6)-(1,2-dicarboxyethyl)-AMP-binding residues include R324, S329, and R333. Residues S329 and R333 each coordinate AMP.

It belongs to the lyase 1 family. Adenylosuccinate lyase subfamily. In terms of assembly, homotetramer.

The enzyme catalyses N(6)-(1,2-dicarboxyethyl)-AMP = fumarate + AMP. Its pathway is purine metabolism; AMP biosynthesis via salvage pathway. Its function is as follows. Catalyzes conversion of succinyladenosine monophosphate (SAMP) to AMP and fumarate on the purine salvage pathway. The polypeptide is Adenylosuccinate lyase (Schistosoma mansoni (Blood fluke)).